The sequence spans 134 residues: MAHTNDTIADMLTRIRNATMARHESVAVPATRMTRSIARVLHEEGFVSDWKEEGEGIHAQLVLRLKYKGKGRKPIINGLKRVSRPGLRVYCNHKELPRVLGGIGIAIISTSNGIMTDRDARKQGIGGEVLCYVY.

This sequence belongs to the universal ribosomal protein uS8 family. Part of the 30S ribosomal subunit. Contacts proteins S5 and S12.

Its function is as follows. One of the primary rRNA binding proteins, it binds directly to 16S rRNA central domain where it helps coordinate assembly of the platform of the 30S subunit. This chain is Small ribosomal subunit protein uS8, found in Synechococcus sp. (strain JA-3-3Ab) (Cyanobacteria bacterium Yellowstone A-Prime).